A 156-amino-acid chain; its full sequence is Arginine repressor (156 aa).

This sequence belongs to the ArgR family.

The protein resides in the cytoplasm. It participates in amino-acid biosynthesis; L-arginine biosynthesis [regulation]. Functionally, regulates arginine biosynthesis genes. The polypeptide is Arginine repressor (Enterobacter sp. (strain 638)).